A 175-amino-acid polypeptide reads, in one-letter code: Nicotinamide-nucleotide adenylyltransferase 1 (175 aa).

This sequence belongs to the archaeal NMN adenylyltransferase family.

Its subcellular location is the cytoplasm. The enzyme catalyses beta-nicotinamide D-ribonucleotide + ATP + H(+) = diphosphate + NAD(+). It participates in cofactor biosynthesis; NAD(+) biosynthesis; NAD(+) from nicotinamide D-ribonucleotide: step 1/1. In Sulfolobus acidocaldarius (strain ATCC 33909 / DSM 639 / JCM 8929 / NBRC 15157 / NCIMB 11770), this protein is Nicotinamide-nucleotide adenylyltransferase 1.